Here is a 163-residue protein sequence, read N- to C-terminus: uncharacterized protein (163 aa).

Basic and acidic residues predominate over residues 1 to 10; sequence MGVPRAREGR. The segment at 1-163 is disordered; it reads MGVPRAREGR…WSFTPLRWGS (163 aa).

This is an uncharacterized protein from Homo sapiens (Human).